Reading from the N-terminus, the 255-residue chain is Triosephosphate isomerase (255 aa).

9-11 (NWK) contacts substrate. The active-site Electrophile is the H96. E170 functions as the Proton acceptor in the catalytic mechanism. Residues G176, S216, and 237–238 (GG) each bind substrate.

This sequence belongs to the triosephosphate isomerase family. In terms of assembly, homodimer.

It localises to the cytoplasm. The enzyme catalyses D-glyceraldehyde 3-phosphate = dihydroxyacetone phosphate. The protein operates within carbohydrate biosynthesis; gluconeogenesis. Its pathway is carbohydrate degradation; glycolysis; D-glyceraldehyde 3-phosphate from glycerone phosphate: step 1/1. Involved in the gluconeogenesis. Catalyzes stereospecifically the conversion of dihydroxyacetone phosphate (DHAP) to D-glyceraldehyde-3-phosphate (G3P). This chain is Triosephosphate isomerase, found in Magnetococcus marinus (strain ATCC BAA-1437 / JCM 17883 / MC-1).